Reading from the N-terminus, the 67-residue chain is MERRTLLVVLLVCSCVVAAAAEASPSRWPSPGRPRPFPGRPNPIFRPRPCICVRQPCPCDTYGGNRW.

A signal peptide spans 1–25 (MERRTLLVVLLVCSCVVAAAAEASP). A disordered region spans residues 22 to 44 (EASPSRWPSPGRPRPFPGRPNPI). Pro residues predominate over residues 31 to 44 (PGRPRPFPGRPNPI). 2 cysteine pairs are disulfide-bonded: Cys-50–Cys-59 and Cys-52–Cys-57.

Interacts with chitin through the N-terminal region (26-48). This interaction may be important, since chitin is a component of the fungal cell wall, as well as of the crab exoskeleton (permitting a possible action of arasin in wound healing in case of lesions). Post-translationally, disulfide bonds are important for activity especially against Gram-negative bacteria, since the linearization of the peptide causes a strong decrease of activity on these bacteria. Mainly expressed in hemocytes. No or very low expression in heart, gills, inestines, and epidermis.

Its function is as follows. Antimicrobial peptide that has a large activity spectrum with activity against Gram-positive, Gram-negative bacteria, as well as against fungi. Shows activity at micromolar concentrations. Displays minimal inhibitory concentration (MIC) values lower than minimal bactericidal concentrations (MBC). May have a dual mode of action depending on the peptide concentrations. At MIC concentrations, the peptide penetrates into the cytoplasm of target cells (tested on the Gram-negative E.coli). The two inner membrane proteins YgdD and SbmA may be required for this uptake. At concentrations higher than MIC, arasin may act by disrupting membranes. Does not show hemolytic activity. The polypeptide is Arasin 2 (Hyas araneus (Atlantic lyre crab)).